Consider the following 275-residue polypeptide: 3-methyl-2-oxobutanoate hydroxymethyltransferase (275 aa).

2 residues coordinate Mg(2+): Asp-44 and Asp-83. 3-methyl-2-oxobutanoate is bound by residues 44-45 (DS), Asp-83, and Lys-113. Residue Glu-115 participates in Mg(2+) binding. Glu-182 functions as the Proton acceptor in the catalytic mechanism.

This sequence belongs to the PanB family. Homodecamer; pentamer of dimers. Mg(2+) serves as cofactor.

Its subcellular location is the cytoplasm. It carries out the reaction 3-methyl-2-oxobutanoate + (6R)-5,10-methylene-5,6,7,8-tetrahydrofolate + H2O = 2-dehydropantoate + (6S)-5,6,7,8-tetrahydrofolate. The protein operates within cofactor biosynthesis; (R)-pantothenate biosynthesis; (R)-pantoate from 3-methyl-2-oxobutanoate: step 1/2. Functionally, catalyzes the reversible reaction in which hydroxymethyl group from 5,10-methylenetetrahydrofolate is transferred onto alpha-ketoisovalerate to form ketopantoate. This is 3-methyl-2-oxobutanoate hydroxymethyltransferase from Clostridium beijerinckii (strain ATCC 51743 / NCIMB 8052) (Clostridium acetobutylicum).